The primary structure comprises 268 residues: Undecaprenyl-diphosphatase (268 aa).

The next 8 membrane-spanning stretches (helical) occupy residues F3–P23, F46–L66, L84–I104, V107–L127, Y144–V164, A185–F205, F213–V233, and F246–I266.

This sequence belongs to the UppP family.

It is found in the cell inner membrane. The catalysed reaction is di-trans,octa-cis-undecaprenyl diphosphate + H2O = di-trans,octa-cis-undecaprenyl phosphate + phosphate + H(+). Its function is as follows. Catalyzes the dephosphorylation of undecaprenyl diphosphate (UPP). Confers resistance to bacitracin. This Brucella abortus (strain S19) protein is Undecaprenyl-diphosphatase.